We begin with the raw amino-acid sequence, 242 residues long: Glucosamine-6-phosphate deaminase (242 aa).

Asp67 (proton acceptor; for enolization step) is an active-site residue. Catalysis depends on Asn137, which acts as the For ring-opening step. His139 acts as the Proton acceptor; for ring-opening step in catalysis. Glu144 functions as the For ring-opening step in the catalytic mechanism.

It belongs to the glucosamine/galactosamine-6-phosphate isomerase family. NagB subfamily.

The catalysed reaction is alpha-D-glucosamine 6-phosphate + H2O = beta-D-fructose 6-phosphate + NH4(+). It functions in the pathway amino-sugar metabolism; N-acetylneuraminate degradation; D-fructose 6-phosphate from N-acetylneuraminate: step 5/5. In terms of biological role, catalyzes the reversible isomerization-deamination of glucosamine 6-phosphate (GlcN6P) to form fructose 6-phosphate (Fru6P) and ammonium ion. This chain is Glucosamine-6-phosphate deaminase, found in Staphylococcus haemolyticus (strain JCSC1435).